The chain runs to 99 residues: ATP-dependent Clp protease adapter protein ClpS (99 aa).

It belongs to the ClpS family. Binds to the N-terminal domain of the chaperone ClpA.

In terms of biological role, involved in the modulation of the specificity of the ClpAP-mediated ATP-dependent protein degradation. The polypeptide is ATP-dependent Clp protease adapter protein ClpS (Helicobacter hepaticus (strain ATCC 51449 / 3B1)).